Here is a 421-residue protein sequence, read N- to C-terminus: O-acetyl-L-homoserine sulfhydrylase 1 (421 aa).

Lys206 carries the post-translational modification N6-(pyridoxal phosphate)lysine.

Belongs to the trans-sulfuration enzymes family. In terms of assembly, homotetramer. Pyridoxal 5'-phosphate serves as cofactor.

It carries out the reaction O-acetyl-L-homoserine + hydrogen sulfide = L-homocysteine + acetate. The protein operates within amino-acid biosynthesis; L-methionine biosynthesis via de novo pathway; L-homocysteine from O-acetyl-L-homoserine: step 1/1. Inhibited by the carbonyl reagents hydroxylamine and phenylhydrazine. Also inhibited by methionine and propargylglycine. Functionally, catalyzes the conversion of O-acetyl-L-homoserine (OAH) into homocysteine in the methionine biosynthesis pathway. Has weak activity with O-acetyl-L-serine, O-phospho-L-serine, L-serine, O-succinyl-L-homoserine and L-homoserine. Shows low CTT beta-lyase activity and very low CTT gamma-synthase activity. The polypeptide is O-acetyl-L-homoserine sulfhydrylase 1 (Thermus thermophilus (strain ATCC 27634 / DSM 579 / HB8)).